Consider the following 308-residue polypeptide: Adult enhancer factor 1 (308 aa).

Disordered stretches follow at residues Ala50–Phe94 and Gln123–Thr143. Over residues Gln56–Gln76 the composition is skewed to low complexity. Residues Pro81 to Leu90 show a composition bias toward pro residues. C2H2-type zinc fingers lie at residues Phe184–His206, Tyr212–His234, Tyr240–His262, and Phe268–His290.

Found in all tissues examined including the ovary and the fat body.

It is found in the nucleus. Transcriptional repressor that binds specifically to fat body-specific enhancers, namely the adult ADH enhancer (AAE) and the enhancer that controls yolk protein gene expression. This is Adult enhancer factor 1 (Aef1) from Drosophila melanogaster (Fruit fly).